Here is a 343-residue protein sequence, read N- to C-terminus: MTTITITRPDDWHIHLRDGAQLKDTVRDISRYMGRAIVMPNLVPPAIDTETALAYYDRIKAQVPAGSQFEPLMVLYLTDKTSPDEIRKAKASGKIVAAKLYPAGATTNSDSGVTDVKNIYPVLQAMQEVGMLFLVHGEVTDSAIDIFDRERVFIENILSKIVADFPALKIVLEHITTKDAVDFVTQASDNVAATITAHHLLYNRNHMLAGGIRPHFYCLPILKRNTHQQALLGAAASGNKKFFLGTDSAPHAKDKKEAACGCAGSYTAHAAIELYAEAFESVNALDKLEAFASFNGPDFYNLPRNSDTITLVKKSWDVPATYPLGDTNVVPIRAGEAIDWQVE.

2 residues coordinate Zn(2+): His-13 and His-15. Residues 15-17 (HLR) and Asn-41 each bind substrate. Lys-99, His-136, and His-174 together coordinate Zn(2+). Lys-99 is subject to N6-carboxylysine. His-136 contributes to the substrate binding site. Position 219 (Leu-219) interacts with substrate. Asp-247 serves as a coordination point for Zn(2+). Residue Asp-247 is part of the active site. Positions 251 and 263 each coordinate substrate.

It belongs to the metallo-dependent hydrolases superfamily. DHOase family. Class II DHOase subfamily. In terms of assembly, homodimer. Zn(2+) is required as a cofactor.

It carries out the reaction (S)-dihydroorotate + H2O = N-carbamoyl-L-aspartate + H(+). It participates in pyrimidine metabolism; UMP biosynthesis via de novo pathway; (S)-dihydroorotate from bicarbonate: step 3/3. Its function is as follows. Catalyzes the reversible cyclization of carbamoyl aspartate to dihydroorotate. In Shewanella putrefaciens (strain CN-32 / ATCC BAA-453), this protein is Dihydroorotase.